A 232-amino-acid polypeptide reads, in one-letter code: Orotidine 5'-phosphate decarboxylase (232 aa).

Residues Asp11, Lys32, 59-68, Thr118, Arg180, Gln189, Gly209, and Arg210 contribute to the substrate site; that span reads DLKFHDIPNT. Lys61 functions as the Proton donor in the catalytic mechanism.

The protein belongs to the OMP decarboxylase family. Type 1 subfamily. As to quaternary structure, homodimer.

It catalyses the reaction orotidine 5'-phosphate + H(+) = UMP + CO2. It functions in the pathway pyrimidine metabolism; UMP biosynthesis via de novo pathway; UMP from orotate: step 2/2. Catalyzes the decarboxylation of orotidine 5'-monophosphate (OMP) to uridine 5'-monophosphate (UMP). The sequence is that of Orotidine 5'-phosphate decarboxylase from Gloeothece citriformis (strain PCC 7424) (Cyanothece sp. (strain PCC 7424)).